We begin with the raw amino-acid sequence, 281 residues long: Bifunctional protein FolD (281 aa).

Residues 161-163, S186, and I227 each bind NADP(+); that span reads GRS.

This sequence belongs to the tetrahydrofolate dehydrogenase/cyclohydrolase family. As to quaternary structure, homodimer.

The enzyme catalyses (6R)-5,10-methylene-5,6,7,8-tetrahydrofolate + NADP(+) = (6R)-5,10-methenyltetrahydrofolate + NADPH. It carries out the reaction (6R)-5,10-methenyltetrahydrofolate + H2O = (6R)-10-formyltetrahydrofolate + H(+). It functions in the pathway one-carbon metabolism; tetrahydrofolate interconversion. Its function is as follows. Catalyzes the oxidation of 5,10-methylenetetrahydrofolate to 5,10-methenyltetrahydrofolate and then the hydrolysis of 5,10-methenyltetrahydrofolate to 10-formyltetrahydrofolate. In Brachyspira hyodysenteriae (strain ATCC 49526 / WA1), this protein is Bifunctional protein FolD.